Consider the following 94-residue polypeptide: uncharacterized protein (94 aa).

An N-terminal signal peptide occupies residues 1 to 26 (MNDQRDQAVPWATGLAVAGFVAAVIA). The next 2 helical transmembrane spans lie at 42-62 (LLAV…LWGW) and 71-91 (FVLG…ALTL).

It localises to the cell membrane. This is an uncharacterized protein from Mycobacterium tuberculosis (strain CDC 1551 / Oshkosh).